Here is a 782-residue protein sequence, read N- to C-terminus: General transcription and DNA repair factor IIH helicase/translocase subunit XPB (782 aa).

Positions 1-11 (MGKRDRADRDK) are enriched in basic and acidic residues. Disordered stretches follow at residues 1 to 51 (MGKR…ESGT) and 218 to 241 (SAISKTAESSGGPSTSRVTDPQGK). Positions 6–18 (RADRDKKKSRKRH) match the Nuclear localization signal motif. Acidic residues predominate over residues 21-30 (DEEDDEEDAP). Positions 218–236 (SAISKTAESSGGPSTSRVT) are enriched in polar residues. The region spanning 327–488 (MFGNGRARSG…DLNFLIGPKL (162 aa)) is the Helicase ATP-binding domain. 340-347 (LPCGAGKS) is a binding site for ATP. The short motif at 441–444 (DEVH) is the DEVH box element. The region spanning 542 to 702 (RACQFLIKFH…LAGMEEEDLA (161 aa)) is the Helicase C-terminal domain. Residues Arg-642 and Arg-645 each coordinate ATP. A Phosphoserine modification is found at Ser-686. Ser-751 is modified (phosphoserine; by CK2).

It belongs to the helicase family. RAD25/XPB subfamily. Component of the 7-subunit TFIIH core complex composed of XPB/ERCC3, XPD/ERCC2, GTF2H1, GTF2H2, GTF2H3, GTF2H4 and GTF2H5, which is active in NER. The core complex associates with the 3-subunit CDK-activating kinase (CAK) module composed of CCNH/cyclin H, CDK7 and MNAT1 to form the 10-subunit holoenzyme (holo-TFIIH) active in transcription. Interacts with PUF60. Interacts with ATF7IP. Interacts with KAT2A; leading to KAT2A recruitment to promoters and acetylation of histones. Part of TBP-based Pol II pre-initiation complex (PIC), in which Pol II core assembles with general transcription factors and other specific initiation factors including GTF2E1, GTF2E2, GTF2F1, GTF2F2, TCEA1, ERCC2, ERCC3, GTF2H2, GTF2H3, GTF2H4, GTF2H5, GTF2A1, GTF2A2, GTF2B and TBP; this large multi-subunit PIC complex mediates DNA unwinding and targets Pol II core to the transcription start site where the first phosphodiester bond forms. In terms of assembly, (Microbial infection) Interacts with Epstein-Barr virus EBNA2. Post-translationally, phosphorylation on Ser-751 by CK2 controls the 5'-excision activity of ERCC1-XPF endonuclease; phosphorylated protein inhibits the excision activity and thus NER. Dephosphorylation reactivates the 5'-excision step. Phosphorylation has no effect on transcription or the 3'-5' helicase activity.

The protein localises to the nucleus. It catalyses the reaction Couples ATP hydrolysis with the unwinding of duplex DNA by translocating in the 3'-5' direction.. The enzyme catalyses ATP + H2O = ADP + phosphate + H(+). Its activity is regulated as follows. Phosphorylation on Ser-751 by CK2 controls the 5'-excision activity of ERCC1-XPF endonuclease; phosphorylated protein inhibits the excision activity and thus NER. ATPase activity is stimulated by TFIIH subunit p52 (GTF2H4). DNA translocase activity by this subunit in TFIIH is stimulated by XPA, ERCC5/XPG and XFP plus ERCC1; translocase activity is sensitive to triptolide which targets this enzyme. Its function is as follows. ATP-dependent 3'-5' DNA helicase/translocase. Binds dsDNA rather than ssDNA, unzipping it in a translocase rather than classical helicase activity. Component of the general transcription and DNA repair factor IIH (TFIIH) core complex. When complexed to CDK-activating kinase (CAK), involved in RNA transcription by RNA polymerase II. The ATPase activity of XPB/ERCC3, but not its helicase activity, is required for DNA opening; it may wrap around the damaged DNA wedging it open, causing localized melting that allows XPD/ERCC2 helicase to anchor. In transcription, TFIIH has an essential role in transcription initiation. When the pre-initiation complex (PIC) has been established, TFIIH is required for promoter opening and promoter escape. The ATP-dependent helicase activity of XPB/ERCC3 is required for promoter opening and promoter escape. In transcription pre-initiation complexes induces and propagates a DNA twist to open DNA. Also involved in transcription-coupled nucleotide excision repair (NER) of damaged DNA. In NER, TFIIH acts by opening DNA around the lesion to allow the excision of the damaged oligonucleotide and its replacement by a new DNA fragment. The structure of the TFIIH transcription complex differs from the NER-TFIIH complex; large movements by XPD/ERCC2 and XPB/ERCC3 are stabilized by XPA. XPA retains XPB/ERCC3 at the 5' end of a DNA bubble (mimicking DNA damage). The chain is General transcription and DNA repair factor IIH helicase/translocase subunit XPB from Homo sapiens (Human).